The following is a 446-amino-acid chain: Exodeoxyribonuclease 7 large subunit (446 aa).

This sequence belongs to the XseA family. In terms of assembly, heterooligomer composed of large and small subunits.

The protein resides in the cytoplasm. The enzyme catalyses Exonucleolytic cleavage in either 5'- to 3'- or 3'- to 5'-direction to yield nucleoside 5'-phosphates.. Its function is as follows. Bidirectionally degrades single-stranded DNA into large acid-insoluble oligonucleotides, which are then degraded further into small acid-soluble oligonucleotides. This Xanthomonas campestris pv. campestris (strain 8004) protein is Exodeoxyribonuclease 7 large subunit.